The following is a 416-amino-acid chain: F-box/FBD/LRR-repeat protein At1g13570 (416 aa).

The 49-residue stretch at 5-53 (PDFISDLPQSIIENILTRLSIRDAIRTSVLSSKWRYKWSTLTDLVFDEK) folds into the F-box domain. LRR repeat units lie at residues 115 to 142 (VLKL…ELCH), 164 to 189 (QILV…SLSY), 203 to 229 (MYLY…SVSM), 238 to 263 (FEQS…VGYI), and 294 to 321 (CFED…KVSA). An FBD domain is found at 346–384 (LPSLESVKITDASGIRYELEFIRFLLGTSPVLETVTVSS).

The polypeptide is F-box/FBD/LRR-repeat protein At1g13570 (Arabidopsis thaliana (Mouse-ear cress)).